The primary structure comprises 496 residues: MSGAITCSAADLSALLGPNATAAADYICGQLGSVNNKFTDAAYAIDNTYLLFSAYLVFAMQLGFAMLCAGSVRAKNTMNIMLTNVLDAAAGGLFYYLFGYAFAFGESSDGFIGRHNFGLQNFPTLTSDYSFFLYQWAFAIAAAGITSGSIAERTKFVAYLIYSSFLTGFVYPVVSHWFWSPDGWASPFRSEDRLFGTGAIDFAGSGVVHMVGGIAGLWGALIEGPRIGRFPDGGHAIALRGHSASLVVLGTFLLWFGWYGFNPGSFTKILIPYNSGSNYGQWSGIGRTAVTTTLSGCTAALTTLFGKRLLSGHWNVTDVCNGLLGGFAAITAGCSVVDPWAAIVCGFVASLVLIGCNKLAELLKYDDPLEAAQLHGGCGAWGLIFVGLFAKEKYINEVYGASPGRHYGLFMGGGGKLLGAQLVQIIVIVGWVSATMGTLFFILKKLNLLRISEQHEMRGMDLAGHGGFAYIYHDNDDDSIGVPGSPVPRAPNPPAV.

A run of 11 helical transmembrane segments spans residues 50–70 (LLFS…LCAG), 85–105 (VLDA…FAFG), 131–151 (FFLY…GSIA), 156–176 (FVAY…VVSH), 202–222 (FAGS…GALI), 246–266 (LVVL…PGSF), 284–306 (GIGR…TLFG), 314–334 (WNVT…TAGC), 336–356 (VVDP…LIGC), 369–389 (LEAA…VGLF), and 422–442 (LVQI…LFFI). At Ser485 the chain carries Phosphoserine.

It belongs to the ammonia transporter channel (TC 1.A.11.2) family.

It localises to the membrane. In terms of biological role, involved in ammonium transport. The polypeptide is Putative ammonium transporter 1 member 5 (AMT1-5) (Arabidopsis thaliana (Mouse-ear cress)).